We begin with the raw amino-acid sequence, 158 residues long: NAD(P)H-quinone oxidoreductase subunit N (158 aa).

The protein belongs to the complex I NdhN subunit family. NDH-1 can be composed of about 15 different subunits; different subcomplexes with different compositions have been identified which probably have different functions.

The protein localises to the cellular thylakoid membrane. It catalyses the reaction a plastoquinone + NADH + (n+1) H(+)(in) = a plastoquinol + NAD(+) + n H(+)(out). It carries out the reaction a plastoquinone + NADPH + (n+1) H(+)(in) = a plastoquinol + NADP(+) + n H(+)(out). Functionally, NDH-1 shuttles electrons from an unknown electron donor, via FMN and iron-sulfur (Fe-S) centers, to quinones in the respiratory and/or the photosynthetic chain. The immediate electron acceptor for the enzyme in this species is believed to be plastoquinone. Couples the redox reaction to proton translocation, and thus conserves the redox energy in a proton gradient. Cyanobacterial NDH-1 also plays a role in inorganic carbon-concentration. This chain is NAD(P)H-quinone oxidoreductase subunit N, found in Prochlorococcus marinus (strain MIT 9215).